A 923-amino-acid polypeptide reads, in one-letter code: Neuropilin-1 (923 aa).

The signal sequence occupies residues 1–21 (MERGLPLLCAVLALVLAPAGA). Topologically, residues 22–856 (FRNDKCGDTI…PGNVLKTLDP (835 aa)) are extracellular. Cystine bridges form between C27–C54, C82–C104, and C147–C173. CUB domains follow at residues 27–141 (CGDT…YEIF) and 147–265 (CSQN…YSVL). N-linked (GlcNAc...) asparagine glycosylation is present at N150. Ca(2+) is bound by residues E195, D209, and D250. A disulfide bond links C206 and C228. N261, N300, and N522 each carry an N-linked (GlcNAc...) asparagine glycan. 2 disulfide bridges follow: C275/C424 and C431/C583. F5/8 type C domains are found at residues 275 to 424 (CMEA…VYGC) and 431 to 583 (CSGM…LLGC). An O-linked (Xyl...) (chondroitin sulfate) serine; alternate glycan is attached at S612. S612 carries an O-linked (Xyl...) (heparan sulfate) serine; alternate glycan. Positions 645-811 (TYGFNCEFGW…NHISQEDCAK (167 aa)) constitute an MAM domain. The tract at residues 820–845 (PEIKIDETGSTPGYEGEGEGDKNISR) is disordered. S829 carries O-linked (Xyl...) (chondroitin sulfate) serine glycosylation. N-linked (GlcNAc...) asparagine glycosylation occurs at N842. A helical transmembrane segment spans residues 857–879 (ILITIIAMSALGVLLGAVCGVVL). At 880–923 (YCACWHNGMSERNLSALENYNFELVDGVKLKKDKLNTQSTYSEA) the chain is on the cytoplasmic side. S894 bears the Phosphoserine mark.

Belongs to the neuropilin family. As to quaternary structure, homodimer, and heterodimer with NRP2. Interacts with FER. Interacts with PLXNB1. Interacts with VEGFA. Interacts with ABCB8/MITOSUR in mitochondria. (Microbial infection) Interacts with SARS coronavirus-2/SARS-CoV-2 spike protein S1 (via the CendR motif RRAR). In terms of tissue distribution, the expression of isoforms 1 and 2 does not seem to overlap. Expressed in olfactory epithelium (at protein level). Expressed in fibroblasts (at protein level). Expressed by the blood vessels of different tissues. In the developing embryo it is found predominantly in the nervous system. In adult tissues, it is highly expressed in heart and placenta; moderately in lung, liver, skeletal muscle, kidney and pancreas; and low in adult brain. Expressed in the central nervous system, including olfactory related regions such as the olfactory tubercles and paraolfactory gyri. The expression of isoforms 1 and 2 does not seem to overlap. Found in liver hepatocytes, kidney distal and proximal tubules.

It localises to the secreted. The protein resides in the mitochondrion membrane. Its subcellular location is the cell membrane. The protein localises to the cytoplasm. In terms of biological role, cell-surface receptor involved in the development of the cardiovascular system, in angiogenesis, in the formation of certain neuronal circuits and in organogenesis outside the nervous system. Mediates the chemorepulsant activity of semaphorins. Recognizes a C-end rule (CendR) motif R/KXXR/K on its ligands which causes cellular internalization and vascular leakage. It binds to semaphorin 3A, the PLGF-2 isoform of PGF, the VEGF165 isoform of VEGFA and VEGFB. Coexpression with KDR results in increased VEGF165 binding to KDR as well as increased chemotaxis. Regulates VEGF-induced angiogenesis. Binding to VEGFA initiates a signaling pathway needed for motor neuron axon guidance and cell body migration, including for the caudal migration of facial motor neurons from rhombomere 4 to rhombomere 6 during embryonic development. Regulates mitochondrial iron transport via interaction with ABCB8/MITOSUR. (Microbial infection) Acts as a host factor for human coronavirus SARS-CoV-2 infection. Recognizes and binds to CendR motif RRAR on SARS-CoV-2 spike protein S1 which enhances SARS-CoV-2 infection. Functionally, binds VEGF-165 and may inhibit its binding to cells. May induce apoptosis by sequestering VEGF-165. May bind as well various members of the semaphorin family. Its expression has an averse effect on blood vessel number and integrity. This is Neuropilin-1 from Homo sapiens (Human).